A 463-amino-acid polypeptide reads, in one-letter code: Hydroxyacid-oxoacid transhydrogenase, mitochondrial (463 aa).

The protein belongs to the iron-containing alcohol dehydrogenase family. Hydroxyacid-oxoacid transhydrogenase subfamily.

The protein resides in the mitochondrion. The enzyme catalyses (S)-3-hydroxybutanoate + 2-oxoglutarate = (R)-2-hydroxyglutarate + acetoacetate. It carries out the reaction 4-hydroxybutanoate + 2-oxoglutarate = (R)-2-hydroxyglutarate + succinate semialdehyde. Functionally, catalyzes the cofactor-independent reversible oxidation of gamma-hydroxybutyrate (GHB) to succinic semialdehyde (SSA) coupled to reduction of 2-ketoglutarate (2-KG) to D-2-hydroxyglutarate (D-2-HG). L-3-hydroxybutyrate (L-3-OHB) is also a substrate for HOT when using 2-KG as hydrogen acceptor, resulting in the formation of D-2-HG. In Xenopus tropicalis (Western clawed frog), this protein is Hydroxyacid-oxoacid transhydrogenase, mitochondrial (adhfe1).